Here is a 439-residue protein sequence, read N- to C-terminus: Chromosomal replication initiator protein DnaA (439 aa).

Residues 1–75 (MESWSRCLER…GIREVVLAIG (75 aa)) are domain I, interacts with DnaA modulators. The segment at 75-101 (GSRPKTTELTVPVDTTGRLSQTVPFNG) is domain II. Positions 102–319 (NLDTHYNFDN…GALNTLVARA (218 aa)) are domain III, AAA+ region. ATP-binding residues include Gly147, Gly149, Lys150, and Thr151. A domain IV, binds dsDNA region spans residues 320-439 (NFTGRAVTIE…WDKLMRKFSE (120 aa)).

Belongs to the DnaA family. As to quaternary structure, oligomerizes as a right-handed, spiral filament on DNA at oriC.

The protein resides in the cytoplasm. Its function is as follows. Plays an essential role in the initiation and regulation of chromosomal replication. ATP-DnaA binds to the origin of replication (oriC) to initiate formation of the DNA replication initiation complex once per cell cycle. Binds the DnaA box (a 9 base pair repeat at the origin) and separates the double-stranded (ds)DNA. Forms a right-handed helical filament on oriC DNA; dsDNA binds to the exterior of the filament while single-stranded (ss)DNA is stabiized in the filament's interior. The ATP-DnaA-oriC complex binds and stabilizes one strand of the AT-rich DNA unwinding element (DUE), permitting loading of DNA polymerase. After initiation quickly degrades to an ADP-DnaA complex that is not apt for DNA replication. Binds acidic phospholipids. This Xylella fastidiosa (strain Temecula1 / ATCC 700964) protein is Chromosomal replication initiator protein DnaA.